Here is a 120-residue protein sequence, read N- to C-terminus: U3-hexatoxin-Hi1a (120 aa).

The first 19 residues, 1-19 (MKLLYFFVVITVLVAVAAA), serve as a signal peptide directing secretion. The propeptide occupies 20–51 (LPAKTEEQIAAEENQLVEDLVQYAGTRLTRKR).

Belongs to the neurotoxin 25 family. F7 subfamily. Contains 4 disulfide bonds. Expressed by the venom gland.

It is found in the secreted. Its function is as follows. Weak insecticidal toxin with probable ion channel impairing activity. In vivo, induces paralysis when injected into sheep blowflies (L.cuprina). Shows weak toxicity, since it is only toxic at high doses, and flies recover within 24 hours. The sequence is that of U3-hexatoxin-Hi1a from Hadronyche infensa (Fraser island funnel-web spider).